We begin with the raw amino-acid sequence, 207 residues long: ATP-dependent Clp protease proteolytic subunit (207 aa).

S111 serves as the catalytic Nucleophile. Residue H136 is part of the active site.

This sequence belongs to the peptidase S14 family. In terms of assembly, fourteen ClpP subunits assemble into 2 heptameric rings which stack back to back to give a disk-like structure with a central cavity, resembling the structure of eukaryotic proteasomes.

The protein localises to the cytoplasm. The catalysed reaction is Hydrolysis of proteins to small peptides in the presence of ATP and magnesium. alpha-casein is the usual test substrate. In the absence of ATP, only oligopeptides shorter than five residues are hydrolyzed (such as succinyl-Leu-Tyr-|-NHMec, and Leu-Tyr-Leu-|-Tyr-Trp, in which cleavage of the -Tyr-|-Leu- and -Tyr-|-Trp bonds also occurs).. Functionally, cleaves peptides in various proteins in a process that requires ATP hydrolysis. Has a chymotrypsin-like activity. Plays a major role in the degradation of misfolded proteins. This is ATP-dependent Clp protease proteolytic subunit from Photorhabdus laumondii subsp. laumondii (strain DSM 15139 / CIP 105565 / TT01) (Photorhabdus luminescens subsp. laumondii).